We begin with the raw amino-acid sequence, 295 residues long: CBY1-interacting BAR domain-containing protein 1 (295 aa).

Residues 1-49 (MMSRTPDARARDTQTKQIQENITSVEKHFGDLCQLFAAYVRKTARLRDK) constitute a mitochondrion transit peptide. Residues 12-222 (DTQTKQIQEN…NVDEEGDLEV (211 aa)) are BAR-like. Residues 111–185 (KREDLKQTQS…KQKIRDIKKV (75 aa)) are a coiled coil. The span at 243–265 (SKLSLNRTGTSMSKSGTMQSRTS) shows a compositional bias: polar residues. A disordered region spans residues 243-295 (SKLSLNRTGTSMSKSGTMQSRTSSRQRKRDDEEDEEEDDEDEDDLEEVTDDEH). Positions 273–295 (DEEDEEEDDEDEDDLEEVTDDEH) are enriched in acidic residues.

The protein belongs to the CIBAR family.

It is found in the cytoplasm. The protein localises to the cytoskeleton. Its subcellular location is the microtubule organizing center. It localises to the centrosome. The protein resides in the centriole. It is found in the cell projection. The protein localises to the cilium. Its subcellular location is the nucleus. It localises to the mitochondrion inner membrane. The protein resides in the flagellum. In terms of biological role, plays a critical role in regulating mitochondrial ultrastructure and function by maintaining the integrity of mitochondrial morphology, particularly the organization of cristae. Plays a crucial role in ciliogenesis. Plays a key role in the correct positioning of the annulus, a septin-based ring structure in the sperm flagellum, serving both as a physical barrier and a membrane diffusion barrier that separates the midpiece (MP) from the principal piece (PP). The chain is CBY1-interacting BAR domain-containing protein 1 (cibar1) from Danio rerio (Zebrafish).